A 212-amino-acid chain; its full sequence is MQAQIMNKIFEIFSKNNPKPQTELIYKNDFTLLVAVILSARATDISVNLATKHLFETYNTPEKFLELGEEGLKKYIKSIGLFNSKAKNIIALCQILIKNYQTSIPNNFKELVKLPGVGRKTANVVLNCLFAMPTMAVDTHVFRVSKRIGLAKGNTAAIVEKELLQIIDEKWLTYAHHWLILHGRYICKARKPGCNICPIKEYCEYYINTFSS.

The region spanning 108 to 127 is the HhH domain; the sequence is FKELVKLPGVGRKTANVVLN. [4Fe-4S] cluster-binding residues include cysteine 187, cysteine 194, cysteine 197, and cysteine 203.

It belongs to the Nth/MutY family. [4Fe-4S] cluster is required as a cofactor.

It carries out the reaction 2'-deoxyribonucleotide-(2'-deoxyribose 5'-phosphate)-2'-deoxyribonucleotide-DNA = a 3'-end 2'-deoxyribonucleotide-(2,3-dehydro-2,3-deoxyribose 5'-phosphate)-DNA + a 5'-end 5'-phospho-2'-deoxyribonucleoside-DNA + H(+). Functionally, DNA repair enzyme that has both DNA N-glycosylase activity and AP-lyase activity. The DNA N-glycosylase activity releases various damaged pyrimidines from DNA by cleaving the N-glycosidic bond, leaving an AP (apurinic/apyrimidinic) site. The AP-lyase activity cleaves the phosphodiester bond 3' to the AP site by a beta-elimination, leaving a 3'-terminal unsaturated sugar and a product with a terminal 5'-phosphate. This chain is Endonuclease III, found in Rickettsia prowazekii (strain Madrid E).